The primary structure comprises 713 residues: Phenylalanine--tRNA ligase beta subunit (713 aa).

The tRNA-binding domain occupies Ile-39 to Ala-153. Positions Leu-379 to Ile-454 constitute a B5 domain. 4 residues coordinate Mg(2+): Asp-432, Asp-438, Glu-441, and Glu-442.

It belongs to the phenylalanyl-tRNA synthetase beta subunit family. Type 1 subfamily. As to quaternary structure, tetramer of two alpha and two beta subunits. Requires Mg(2+) as cofactor.

It is found in the cytoplasm. The enzyme catalyses tRNA(Phe) + L-phenylalanine + ATP = L-phenylalanyl-tRNA(Phe) + AMP + diphosphate + H(+). The protein is Phenylalanine--tRNA ligase beta subunit of Mycoplasma mobile (strain ATCC 43663 / 163K / NCTC 11711) (Mesomycoplasma mobile).